Reading from the N-terminus, the 464-residue chain is UDP-glycosyltransferase 76F2 (464 aa).

Residues Ser-279, 338-340, 355-363, and 377-380 each bind UDP-alpha-D-glucose; these read VNQ, HCGWNSTIE, and FSDQ.

Belongs to the UDP-glycosyltransferase family.

The chain is UDP-glycosyltransferase 76F2 (UGT76F2) from Arabidopsis thaliana (Mouse-ear cress).